We begin with the raw amino-acid sequence, 116 residues long: Large ribosomal subunit protein bL20 (116 aa).

Belongs to the bacterial ribosomal protein bL20 family.

In terms of biological role, binds directly to 23S ribosomal RNA and is necessary for the in vitro assembly process of the 50S ribosomal subunit. It is not involved in the protein synthesizing functions of that subunit. The polypeptide is Large ribosomal subunit protein bL20 (Mycoplasmopsis pulmonis (strain UAB CTIP) (Mycoplasma pulmonis)).